Here is a 148-residue protein sequence, read N- to C-terminus: MRSTFLAKPHEIQRNWYIVDATDVPLGRLSSVVATVLRGKNKPTFTPSVDTGDFVIVINADKVQLTGKKATDKTYYHHSGYPGGLKARKAGTLREKNPKKLIELSVQGMLPKNTLGRAQGLKLHVYASGEEVGQSAQKPQVLNIKDLL.

Belongs to the universal ribosomal protein uL13 family. In terms of assembly, part of the 50S ribosomal subunit.

In terms of biological role, this protein is one of the early assembly proteins of the 50S ribosomal subunit, although it is not seen to bind rRNA by itself. It is important during the early stages of 50S assembly. This is Large ribosomal subunit protein uL13 from Oenococcus oeni (strain ATCC BAA-331 / PSU-1).